Consider the following 167-residue polypeptide: Telethonin (167 aa).

Ser39 carries the post-translational modification Phosphoserine. The segment at 144-167 is disordered; that stretch reads VPVSKPGALRRSLSRSMSQEAQRG. The segment covering 157–167 has biased composition (polar residues); it reads SRSMSQEAQRG.

In terms of assembly, interacts with MYOZ1, MYOZ2 and MYOZ3. Interacts with CSRP3. Interacts directly with the N-terminal Ig-like domains of 2 titin (TTN) molecules. Interacts with ANKRD2; the interaction is direct. Heart and skeletal muscle.

The protein resides in the cytoplasm. It is found in the myofibril. It localises to the sarcomere. Muscle assembly regulating factor. Mediates the antiparallel assembly of titin (TTN) molecules at the sarcomeric Z-disk. This is Telethonin (TCAP) from Homo sapiens (Human).